Reading from the N-terminus, the 201-residue chain is Natural cytotoxicity triggering receptor 3 (201 aa).

The first 18 residues, 1 to 18, serve as a signal peptide directing secretion; that stretch reads MAWMLLLILIMVHPGSCA. The Ig-like domain occupies 19-126; sequence LWVSQPPEIR…VGTGNGTRLV (108 aa). Residues 19-135 lie on the Extracellular side of the membrane; that stretch reads LWVSQPPEIR…VVEKEHPQLG (117 aa). Cys-39 and Cys-108 are disulfide-bonded. N-linked (GlcNAc...) asparagine glycans are attached at residues Asn-42 and Asn-121. Residues 136–156 form a helical membrane-spanning segment; the sequence is AGTVLLLRAGFYAVSFLSVAV. At 157–201 the chain is on the cytoplasmic side; that stretch reads GSTVYYQGKCLTWKGPRRQLPAVVPAPLPPPCGSSAHLLPPVPGG.

It belongs to the natural cytotoxicity receptor (NCR) family. As to quaternary structure, homodimer in the unliganted form. Interacts with CD3Z. Interacts with and is activated by binding to NCR3LG1. Interacts with and is activated by binding to BAG6. Interacts with and is inhibited by binding to LGALS3. In terms of tissue distribution, selectively expressed by all resting and activated NK cells and weakly expressed in spleen.

It localises to the cell membrane. Cell membrane receptor of natural killer/NK cells that is activated by binding of extracellular ligands including BAG6 and NCR3LG1. Stimulates NK cells cytotoxicity toward neighboring cells producing these ligands. It controls, for instance, NK cells cytotoxicity against tumor cells. Engagement of NCR3 by BAG6 also promotes myeloid dendritic cells (DC) maturation, both through killing DCs that did not acquire a mature phenotype, and inducing the release by NK cells of TNFA and IFNG which promote DC maturation. In Homo sapiens (Human), this protein is Natural cytotoxicity triggering receptor 3.